We begin with the raw amino-acid sequence, 1306 residues long: Synergin gamma (1306 aa).

Positions 113–153 (MQKQFAEEQQKRFEQQQKLLEEERKRRQFEEQKQKLRLLSS) form a coiled coil. 2 disordered regions span residues 176-196 (GFSR…KQGP) and 252-285 (SGPA…PAQS). A compositionally biased stretch (basic and acidic residues) spans 258-272 (EAEKTSDQTLSKEES). In terms of domain architecture, EH spans 293 to 404 (NESLVPDAYK…TPVSQPTAMP (112 aa)). The DFXDF motif 1 signature appears at 455–459 (DFQDF). The interval 460–494 (QDASKSGSIDDSFTDFQEMPASSKTSNSQHGNSAP) is disordered. Position 471 is a phosphoserine (Ser-471). Lys-509 is modified (N6-acetyllysine). Positions 514–778 (KGISTDKPSE…ADFHSSKFSS (265 aa)) are interaction with AP1G1. A disordered region spans residues 559–601 (STGTDDGFTDFKTADSVSPLEPPTKDTFPSAFASGAAQQTQTQ). Phosphoserine is present on Ser-576. The tract at residues 661 to 673 (LADDFGEFNLFGE) is interaction with AP1G1, AP1G2 and GGA1. A DFXDF motif 2 motif is present at residues 685-689 (DFADF). Positions 697-730 (ISSEPKASDKYEALREEVSPSPLSSSTVEGAQHP) are disordered. A compositionally biased stretch (basic and acidic residues) spans 702-714 (KASDKYEALREEV). Position 715 is a phosphoserine (Ser-715). At Lys-736 the chain carries N6-acetyllysine. Phosphoserine occurs at positions 744 and 764. A DFXDF motif 3 motif is present at residues 767-771 (DFADF). Residues Ser-804, Ser-844, Ser-847, Ser-901, Ser-911, Ser-927, Ser-974, Ser-998, Ser-1065, Ser-1067, Ser-1079, and Ser-1090 each carry the phosphoserine modification. Disordered regions lie at residues 986–1016 (PTVD…ADDF) and 1065–1090 (SLSL…RDRS). Residues 993-1005 (ETSCPSPASSVAS) show a composition bias toward polar residues. Thr-1092 carries the phosphothreonine modification.

As to quaternary structure, self-associates. Interacts with GGA1 (via GAE domain). Interacts with GGA2 and GGA3. Interacts with AP1G1 (via GAE domain), a subunit of adapter protein complex AP-1. Interacts with AP1G2 (via GAE domain) a subunit of adapter protein complex AP-1. Component of the aftiphilin/p200/gamma-synergin complex, at least composed of AFTPH/aftiphilin, HEATR5B/p200a and SYNRG/gamma-synergin, which plays a role in the AP1G1/AP-1-mediated trafficking of transferrin from early to recycling endosomes. Within the complex interacts with AFTPH/aftiphilin and HEATR5B/p200a; the interactions are direct. Interacts (via EH domain) with SCAMP1.

The protein localises to the cytoplasm. The protein resides in the cytosol. It is found in the golgi apparatus. Its subcellular location is the trans-Golgi network membrane. It localises to the perinuclear region. The protein localises to the cytoplasmic vesicle. The protein resides in the clathrin-coated vesicle. In terms of biological role, plays a role in endocytosis and/or membrane trafficking at the trans-Golgi network (TGN). May act by linking the adapter protein complex AP-1 to other proteins. Component of clathrin-coated vesicles. Component of the aftiphilin/p200/gamma-synergin complex, which plays roles in AP1G1/AP-1-mediated protein trafficking including the trafficking of transferrin from early to recycling endosomes, and the membrane trafficking of furin and the lysosomal enzyme cathepsin D between the trans-Golgi network (TGN) and endosomes. The protein is Synergin gamma (Synrg) of Mus musculus (Mouse).